The chain runs to 180 residues: Segregation and condensation protein B (180 aa).

It belongs to the ScpB family. As to quaternary structure, homodimer. Homodimerization may be required to stabilize the binding of ScpA to the Smc head domains. Component of a cohesin-like complex composed of ScpA, ScpB and the Smc homodimer, in which ScpA and ScpB bind to the head domain of Smc. The presence of the three proteins is required for the association of the complex with DNA.

The protein resides in the cytoplasm. Functionally, participates in chromosomal partition during cell division. May act via the formation of a condensin-like complex containing Smc and ScpA that pull DNA away from mid-cell into both cell halves. The protein is Segregation and condensation protein B of Staphylococcus aureus (strain Mu3 / ATCC 700698).